A 316-amino-acid chain; its full sequence is tRNA dimethylallyltransferase (316 aa).

17 to 24 contacts ATP; that stretch reads GPTASGKT. 19 to 24 lines the substrate pocket; it reads TASGKT. Interaction with substrate tRNA stretches follow at residues 42 to 45, 166 to 170, and 247 to 252; these read DSAL, QRLSR, and RCVGYR.

Belongs to the IPP transferase family. In terms of assembly, monomer. Mg(2+) is required as a cofactor.

It catalyses the reaction adenosine(37) in tRNA + dimethylallyl diphosphate = N(6)-dimethylallyladenosine(37) in tRNA + diphosphate. Catalyzes the transfer of a dimethylallyl group onto the adenine at position 37 in tRNAs that read codons beginning with uridine, leading to the formation of N6-(dimethylallyl)adenosine (i(6)A). This is tRNA dimethylallyltransferase from Erwinia tasmaniensis (strain DSM 17950 / CFBP 7177 / CIP 109463 / NCPPB 4357 / Et1/99).